The following is a 360-amino-acid chain: Protein Wnt-2 (360 aa).

The N-terminal stretch at 1–25 (MNVPLGGIWLWLPLLLTWLTPEVSS) is a signal peptide. 11 cysteine pairs are disulfide-bonded: C76-C87, C127-C135, C137-C157, C206-C220, C208-C215, C278-C309, C294-C304, C308-C348, C324-C339, C326-C336, and C331-C332. Residue S212 is the site of O-palmitoleoyl serine; by PORCN attachment. N295 is a glycosylation site (N-linked (GlcNAc...) asparagine).

Belongs to the Wnt family. In terms of processing, palmitoleoylation is required for efficient binding to frizzled receptors. Depalmitoleoylation leads to Wnt signaling pathway inhibition. In terms of tissue distribution, in embryos in the developing allantois, pericardium heart, and ventral-lateral mesoderm; in adults in lung, brain, heart and placenta.

It localises to the secreted. Its subcellular location is the extracellular space. It is found in the extracellular matrix. Functionally, ligand for members of the frizzled family of seven transmembrane receptors. Functions in the canonical Wnt/beta-catenin signaling pathway. Functions as a upstream regulator of FGF10 expression. Plays an important role in embryonic lung development. May contribute to embryonic brain development by regulating the proliferation of dopaminergic precursors and neurons. This is Protein Wnt-2 (Wnt2) from Mus musculus (Mouse).